We begin with the raw amino-acid sequence, 559 residues long: CTP synthase (559 aa).

Residues 1-270 form an amidoligase domain region; that stretch reads MTKFVFVTGG…DGLICDKLRI (270 aa). Ser13 lines the CTP pocket. Ser13 is a UTP binding site. ATP contacts are provided by residues 14 to 19 and Asp71; that span reads SLGKGI. 2 residues coordinate Mg(2+): Asp71 and Glu144. CTP contacts are provided by residues 151–153, 191–196, and Lys227; these read DIE and KTKPTQ. UTP contacts are provided by residues 191–196 and Lys227; that span reads KTKPTQ. The Glutamine amidotransferase type-1 domain occupies 295–547; that stretch reads SIAMVGKYVD…IKAALDHKAR (253 aa). Position 356 (Gly356) interacts with L-glutamine. Catalysis depends on Cys383, which acts as the Nucleophile; for glutamine hydrolysis. Residues 384 to 387, Glu407, and Arg473 contribute to the L-glutamine site; that span reads LGMQ. Residues His520 and Glu522 contribute to the active site.

The protein belongs to the CTP synthase family. As to quaternary structure, homotetramer.

It catalyses the reaction UTP + L-glutamine + ATP + H2O = CTP + L-glutamate + ADP + phosphate + 2 H(+). It carries out the reaction L-glutamine + H2O = L-glutamate + NH4(+). The catalysed reaction is UTP + NH4(+) + ATP = CTP + ADP + phosphate + 2 H(+). Its pathway is pyrimidine metabolism; CTP biosynthesis via de novo pathway; CTP from UDP: step 2/2. Allosterically activated by GTP, when glutamine is the substrate; GTP has no effect on the reaction when ammonia is the substrate. The allosteric effector GTP functions by stabilizing the protein conformation that binds the tetrahedral intermediate(s) formed during glutamine hydrolysis. Inhibited by the product CTP, via allosteric rather than competitive inhibition. Its function is as follows. Catalyzes the ATP-dependent amination of UTP to CTP with either L-glutamine or ammonia as the source of nitrogen. Regulates intracellular CTP levels through interactions with the four ribonucleotide triphosphates. The polypeptide is CTP synthase (Variovorax paradoxus (strain S110)).